The primary structure comprises 152 residues: UPF0266 membrane protein YobD (152 aa).

A run of 3 helical transmembrane segments spans residues 6-26 (LLLI…QFIM), 45-65 (VDSV…VTSH), and 67-87 (AQMT…IFWI).

The protein belongs to the UPF0266 family.

It is found in the cell inner membrane. This Salmonella paratyphi C (strain RKS4594) protein is UPF0266 membrane protein YobD.